The sequence spans 1390 residues: DNA-directed RNA polymerase subunit beta' (1390 aa).

Residues cysteine 70, cysteine 72, cysteine 85, and cysteine 88 each contribute to the Zn(2+) site. Positions 460, 462, and 464 each coordinate Mg(2+). Zn(2+)-binding residues include cysteine 814, cysteine 888, cysteine 895, and cysteine 898.

The protein belongs to the RNA polymerase beta' chain family. In terms of assembly, the RNAP catalytic core consists of 2 alpha, 1 beta, 1 beta' and 1 omega subunit. When a sigma factor is associated with the core the holoenzyme is formed, which can initiate transcription. Mg(2+) is required as a cofactor. It depends on Zn(2+) as a cofactor.

The catalysed reaction is RNA(n) + a ribonucleoside 5'-triphosphate = RNA(n+1) + diphosphate. In terms of biological role, DNA-dependent RNA polymerase catalyzes the transcription of DNA into RNA using the four ribonucleoside triphosphates as substrates. This is DNA-directed RNA polymerase subunit beta' from Pseudoalteromonas translucida (strain TAC 125).